The primary structure comprises 463 residues: Mitochondrial dynamics protein MID49 (463 aa).

Residues 1–24 (MAELQIRKKEKKSGDGIGTMVDFL) lie on the Mitochondrial intermembrane side of the membrane. The helical transmembrane segment at 25-47 (LANARLVLGVGGAAMLGIATLAV) threads the bilayer. The Cytoplasmic portion of the chain corresponds to 48–463 (KRLIDRATSP…EPDDVLKRER (416 aa)). A disordered region spans residues 87-119 (TLRRKEDLEHHCAPLSLPDPSQKMPEATGTSQV). Over residues 89 to 98 (RRKEDLEHHC) the composition is skewed to basic and acidic residues.

The protein belongs to the MID49/MID51 family.

Its subcellular location is the mitochondrion outer membrane. Mitochondrial outer membrane protein which regulates mitochondrial organization. It is required for mitochondrial fission and promotes the recruitment and association of the fission mediator dynamin-related protein 1 (DNM1L) to the mitochondrial surface independently of the mitochondrial fission FIS1 and MFF proteins. Regulates DNM1L GTPase activity. This chain is Mitochondrial dynamics protein MID49 (mief2), found in Xenopus laevis (African clawed frog).